Here is a 171-residue protein sequence, read N- to C-terminus: Endoribonuclease YbeY (171 aa).

Zn(2+)-binding residues include His-126, His-130, and His-136.

The protein belongs to the endoribonuclease YbeY family. Requires Zn(2+) as cofactor.

It localises to the cytoplasm. In terms of biological role, single strand-specific metallo-endoribonuclease involved in late-stage 70S ribosome quality control and in maturation of the 3' terminus of the 16S rRNA. The polypeptide is Endoribonuclease YbeY (Rhizobium etli (strain CIAT 652)).